The sequence spans 103 residues: Large ribosomal subunit protein uL23 (103 aa).

It belongs to the universal ribosomal protein uL23 family. In terms of assembly, part of the 50S ribosomal subunit. Contacts protein L29, and trigger factor when it is bound to the ribosome.

In terms of biological role, one of the early assembly proteins it binds 23S rRNA. One of the proteins that surrounds the polypeptide exit tunnel on the outside of the ribosome. Forms the main docking site for trigger factor binding to the ribosome. This chain is Large ribosomal subunit protein uL23, found in Prochlorococcus marinus (strain NATL1A).